We begin with the raw amino-acid sequence, 391 residues long: Elongation factor Tu (391 aa).

In terms of domain architecture, tr-type G spans 10–201 (KPHVNIGTIG…AVDEYIPTPA (192 aa)). The interval 19-26 (GHVDHGKT) is G1. 19 to 26 (GHVDHGKT) provides a ligand contact to GTP. T26 provides a ligand contact to Mg(2+). Residues 55–59 (GITIS) form a G2 region. Residues 76 to 79 (DCPG) are G3. Residues 76 to 80 (DCPGH) and 131 to 134 (NKVD) each bind GTP. A G4 region spans residues 131–134 (NKVD). The G5 stretch occupies residues 169–171 (SAL).

The protein belongs to the TRAFAC class translation factor GTPase superfamily. Classic translation factor GTPase family. EF-Tu/EF-1A subfamily. As to quaternary structure, monomer.

It localises to the cytoplasm. The catalysed reaction is GTP + H2O = GDP + phosphate + H(+). Its function is as follows. GTP hydrolase that promotes the GTP-dependent binding of aminoacyl-tRNA to the A-site of ribosomes during protein biosynthesis. In Cereibacter sphaeroides (strain ATCC 17029 / ATH 2.4.9) (Rhodobacter sphaeroides), this protein is Elongation factor Tu.